Consider the following 146-residue polypeptide: D-aminoacyl-tRNA deacylase (146 aa).

The Gly-cisPro motif, important for rejection of L-amino acids signature appears at 137–138; that stretch reads GP.

It belongs to the DTD family. As to quaternary structure, homodimer.

The protein resides in the cytoplasm. The enzyme catalyses glycyl-tRNA(Ala) + H2O = tRNA(Ala) + glycine + H(+). It catalyses the reaction a D-aminoacyl-tRNA + H2O = a tRNA + a D-alpha-amino acid + H(+). Functionally, an aminoacyl-tRNA editing enzyme that deacylates mischarged D-aminoacyl-tRNAs. Also deacylates mischarged glycyl-tRNA(Ala), protecting cells against glycine mischarging by AlaRS. Acts via tRNA-based rather than protein-based catalysis; rejects L-amino acids rather than detecting D-amino acids in the active site. By recycling D-aminoacyl-tRNA to D-amino acids and free tRNA molecules, this enzyme counteracts the toxicity associated with the formation of D-aminoacyl-tRNA entities in vivo and helps enforce protein L-homochirality. The chain is D-aminoacyl-tRNA deacylase from Bacillus cereus (strain ATCC 14579 / DSM 31 / CCUG 7414 / JCM 2152 / NBRC 15305 / NCIMB 9373 / NCTC 2599 / NRRL B-3711).